A 178-amino-acid polypeptide reads, in one-letter code: ATP synthase subunit b, chloroplastic (178 aa).

Residues Thr-26–Leu-46 form a helical membrane-spanning segment.

The protein belongs to the ATPase B chain family. F-type ATPases have 2 components, F(1) - the catalytic core - and F(0) - the membrane proton channel. F(1) has five subunits: alpha(3), beta(3), gamma(1), delta(1), epsilon(1). F(0) has four main subunits: a(1), b(1), b'(1) and c(10-14). The alpha and beta chains form an alternating ring which encloses part of the gamma chain. F(1) is attached to F(0) by a central stalk formed by the gamma and epsilon chains, while a peripheral stalk is formed by the delta, b and b' chains.

It is found in the plastid. Its subcellular location is the chloroplast thylakoid membrane. F(1)F(0) ATP synthase produces ATP from ADP in the presence of a proton or sodium gradient. F-type ATPases consist of two structural domains, F(1) containing the extramembraneous catalytic core and F(0) containing the membrane proton channel, linked together by a central stalk and a peripheral stalk. During catalysis, ATP synthesis in the catalytic domain of F(1) is coupled via a rotary mechanism of the central stalk subunits to proton translocation. In terms of biological role, component of the F(0) channel, it forms part of the peripheral stalk, linking F(1) to F(0). The sequence is that of ATP synthase subunit b, chloroplastic from Vaucheria litorea (Yellow-green alga).